The following is a 561-amino-acid chain: Efflux pump bfoC (561 aa).

Residues 1-55 form a disordered region; the sequence is MSDTARILGGPSASSSRDGGMELNSFTEVSQTNSRSHSTKEEEGQVDDQQRPARE. A compositionally biased stretch (polar residues) spans 24–36; sequence NSFTEVSQTNSRS. Basic and acidic residues predominate over residues 38–55; sequence STKEEEGQVDDQQRPARE. 13 helical membrane passes run 59 to 79, 103 to 123, 128 to 148, 164 to 184, 194 to 214, 222 to 242, 257 to 277, 293 to 313, 335 to 355, 378 to 398, 425 to 445, 457 to 477, and 530 to 550; these read GVLGGYKLVLVTIGLCFCIFC, DVGWYASAYLLTTCAVTLTFG, FFPIKWVYLSALLIFELGSFI, VAGLGGGGLLSGSLLIISQCV, GFIMSIFAVASVIAPLMGGAF, WCFYINLPFGLVSAVVILFTF, AVGLDPLGTATFLPGIVCLLL, VVALFVLFGVLLVCFIGLQLW, LYGFCLNGAMFTFVYYLPIWF, VVFAIISGVLVSMTGYLGPFM, IGYQVLLGLSIGVGFQVPIFV, TATALMTFIQLLGGAIFVSVA, and VHTFYLAIGLAAASFLAATVI.

The protein belongs to the major facilitator superfamily. TCR/Tet family.

The protein localises to the cell membrane. Efflux pump; part of the gene cluster that mediates the biosynthesis of bifonsecin B, a dimeric gamma-naphthopyrone. This chain is Efflux pump bfoC, found in Aspergillus brasiliensis (strain CBS 101740 / IMI 381727 / IBT 21946).